We begin with the raw amino-acid sequence, 201 residues long: Dephospho-CoA kinase (201 aa).

Positions 6-201 constitute a DPCK domain; sequence VMGLTGSIGM…RAIREKNPRG (196 aa). 14–19 is an ATP binding site; it reads GMGKSA.

It belongs to the CoaE family.

Its subcellular location is the cytoplasm. It catalyses the reaction 3'-dephospho-CoA + ATP = ADP + CoA + H(+). It participates in cofactor biosynthesis; coenzyme A biosynthesis; CoA from (R)-pantothenate: step 5/5. Functionally, catalyzes the phosphorylation of the 3'-hydroxyl group of dephosphocoenzyme A to form coenzyme A. The protein is Dephospho-CoA kinase of Novosphingobium aromaticivorans (strain ATCC 700278 / DSM 12444 / CCUG 56034 / CIP 105152 / NBRC 16084 / F199).